Reading from the N-terminus, the 365-residue chain is Alanine racemase (365 aa).

Lys-32 functions as the Proton acceptor; specific for D-alanine in the catalytic mechanism. Residue Lys-32 is modified to N6-(pyridoxal phosphate)lysine. Arg-128 is a binding site for substrate. Catalysis depends on Tyr-257, which acts as the Proton acceptor; specific for L-alanine. Substrate is bound at residue Met-305.

It belongs to the alanine racemase family. Pyridoxal 5'-phosphate serves as cofactor.

It carries out the reaction L-alanine = D-alanine. It participates in amino-acid biosynthesis; D-alanine biosynthesis; D-alanine from L-alanine: step 1/1. Catalyzes the interconversion of L-alanine and D-alanine. May also act on other amino acids. The chain is Alanine racemase (alr) from Francisella tularensis subsp. holarctica (strain OSU18).